The sequence spans 157 residues: Small ribosomal subunit protein uS9 (157 aa).

It belongs to the universal ribosomal protein uS9 family.

In Caulobacter vibrioides (strain ATCC 19089 / CIP 103742 / CB 15) (Caulobacter crescentus), this protein is Small ribosomal subunit protein uS9.